The chain runs to 215 residues: Ras-related protein Rab-5B (215 aa).

At Thr2 the chain carries N-acetylthreonine. GTP-binding residues include Ser29, Ala30, Gly32, Lys33, Ser34, Ser35, His46, Glu47, Thr52, and Gly78. A Mg(2+)-binding site is contributed by Ser34. 2 consecutive short sequence motifs (switch) follow at residues 44-56 (QFHE…IGAA) and 77-93 (AGQE…YRGA). Thr52 contacts Mg(2+). Ser84 carries the phosphoserine; by LRRK2 modification. GTP-binding residues include Asn133, Lys134, Asp136, Ala164, and Lys165. The disordered stretch occupies residues 186-215 (PQNLGGAAGRSRGVDLHEQSQQNKSQCCSN). Over residues 204-215 (QSQQNKSQCCSN) the composition is skewed to low complexity. 2 S-geranylgeranyl cysteine lipidation sites follow: Cys212 and Cys213.

Belongs to the small GTPase superfamily. Rab family. In terms of assembly, binds EEA1. Interacts with RIN2 and RIN3, which probably regulate its pathway, possibly by acting as GEFs. Interacts with GDI1, GDI2, CHML and CHM; phosphorylation at Ser-84 disrupts this interaction. Mg(2+) is required as a cofactor. In terms of processing, phosphorylation of Ser-84 in the switch II region by LRRK2 prevents the association of RAB regulatory proteins, including CHM, CHML and RAB GDP dissociation inhibitors GDI1 and GDI2. Post-translationally, (Microbial infection) Glycosylated on arginine residues by S.typhimurium protein Ssek3.

Its subcellular location is the cell membrane. The protein localises to the early endosome membrane. The protein resides in the melanosome. It catalyses the reaction GTP + H2O = GDP + phosphate + H(+). Regulated by guanine nucleotide exchange factors (GEFs) which promote the exchange of bound GDP for free GTP. Regulated by GTPase activating proteins (GAPs) which increase the GTP hydrolysis activity. Inhibited by GDP dissociation inhibitors (GDIs). Its function is as follows. The small GTPases Rab are key regulators of intracellular membrane trafficking, from the formation of transport vesicles to their fusion with membranes. Rabs cycle between an inactive GDP-bound form and an active GTP-bound form that is able to recruit to membranes different sets of downstream effectors directly responsible for vesicle formation, movement, tethering and fusion. The sequence is that of Ras-related protein Rab-5B from Homo sapiens (Human).